Here is a 150-residue protein sequence, read N- to C-terminus: Heat shock protein beta-3 (150 aa).

The region spanning 47–150 (KTRAAQSPPV…VEVKDPVGTK (104 aa)) is the sHSP domain.

Belongs to the small heat shock protein (HSP20) family.

It is found in the cytoplasm. Its subcellular location is the nucleus. Inhibitor of actin polymerization. The chain is Heat shock protein beta-3 (HSPB3) from Homo sapiens (Human).